A 434-amino-acid polypeptide reads, in one-letter code: Methylenetetrahydrofolate--tRNA-(uracil-5-)-methyltransferase TrmFO (434 aa).

An FAD-binding site is contributed by 9 to 14; it reads GAGLAG.

Belongs to the MnmG family. TrmFO subfamily. FAD is required as a cofactor.

Its subcellular location is the cytoplasm. It carries out the reaction uridine(54) in tRNA + (6R)-5,10-methylene-5,6,7,8-tetrahydrofolate + NADH + H(+) = 5-methyluridine(54) in tRNA + (6S)-5,6,7,8-tetrahydrofolate + NAD(+). It catalyses the reaction uridine(54) in tRNA + (6R)-5,10-methylene-5,6,7,8-tetrahydrofolate + NADPH + H(+) = 5-methyluridine(54) in tRNA + (6S)-5,6,7,8-tetrahydrofolate + NADP(+). Its function is as follows. Catalyzes the folate-dependent formation of 5-methyl-uridine at position 54 (M-5-U54) in all tRNAs. This chain is Methylenetetrahydrofolate--tRNA-(uracil-5-)-methyltransferase TrmFO, found in Listeria monocytogenes serotype 4b (strain F2365).